We begin with the raw amino-acid sequence, 315 residues long: AT-hook motif nuclear-localized protein 19 (315 aa).

Positions 1–25 are enriched in polar residues; the sequence is MANPWWTGQVNLSGLETTPPGSSQL. 2 disordered regions span residues 1 to 104 and 239 to 285; these read MANP…RDSP and EEEA…YNMP. Over residues 61–74 the composition is skewed to basic and acidic residues; that stretch reads DNLSGDDHEPREGA. A DNA-binding region (a.T hook) is located at residues 80-92; that stretch reads RRPRGRPAGSKNK. A PPC domain is found at 104-248; the sequence is PNALKSHVME…EEEAAERGGG (145 aa). Gly residues predominate over residues 245-276; sequence RGGGGGSGGVVPGQLGGGGSPLSSGAGGGDGN.

Slightly expressed in roots.

It localises to the nucleus. Functionally, transcription factor that specifically binds AT-rich DNA sequences related to the nuclear matrix attachment regions (MARs). Negatively regulates plant innate immunity (PTI) to pathogens through the down-regulation of the PAMP-triggered FRK1 expression. Positively regulates defense against fungal Verticillium infection. This chain is AT-hook motif nuclear-localized protein 19, found in Arabidopsis thaliana (Mouse-ear cress).